Consider the following 322-residue polypeptide: Pantothenate kinase (322 aa).

Position 100 to 107 (100 to 107 (GSVAVGKS)) interacts with ATP.

This sequence belongs to the prokaryotic pantothenate kinase family.

The protein localises to the cytoplasm. It carries out the reaction (R)-pantothenate + ATP = (R)-4'-phosphopantothenate + ADP + H(+). It functions in the pathway cofactor biosynthesis; coenzyme A biosynthesis; CoA from (R)-pantothenate: step 1/5. The sequence is that of Pantothenate kinase from Brucella abortus (strain 2308).